A 129-amino-acid chain; its full sequence is Large-conductance mechanosensitive channel (129 aa).

3 helical membrane-spanning segments follow: residues 8–28 (FIMR…AAFT), 30–50 (IVKS…AGAV), and 67–87 (GAVL…FLII).

Belongs to the MscL family. In terms of assembly, homopentamer.

It localises to the cell membrane. In terms of biological role, channel that opens in response to stretch forces in the membrane lipid bilayer. May participate in the regulation of osmotic pressure changes within the cell. The chain is Large-conductance mechanosensitive channel from Oenococcus oeni (strain ATCC BAA-331 / PSU-1).